The primary structure comprises 498 residues: ATP synthase subunit beta, chloroplastic (498 aa).

Residue 172 to 179 (GGAGVGKT) participates in ATP binding.

This sequence belongs to the ATPase alpha/beta chains family. In terms of assembly, F-type ATPases have 2 components, CF(1) - the catalytic core - and CF(0) - the membrane proton channel. CF(1) has five subunits: alpha(3), beta(3), gamma(1), delta(1), epsilon(1). CF(0) has four main subunits: a(1), b(1), b'(1) and c(9-12).

The protein resides in the plastid. The protein localises to the chloroplast thylakoid membrane. It catalyses the reaction ATP + H2O + 4 H(+)(in) = ADP + phosphate + 5 H(+)(out). Its function is as follows. Produces ATP from ADP in the presence of a proton gradient across the membrane. The catalytic sites are hosted primarily by the beta subunits. This Cinnamomum camphora (Camphor tree) protein is ATP synthase subunit beta, chloroplastic.